Reading from the N-terminus, the 178-residue chain is Probable chorismate pyruvate-lyase (178 aa).

Residues arginine 72, leucine 110, and glutamate 169 each coordinate substrate.

The protein belongs to the UbiC family.

The protein localises to the cytoplasm. It carries out the reaction chorismate = 4-hydroxybenzoate + pyruvate. It functions in the pathway cofactor biosynthesis; ubiquinone biosynthesis. Functionally, removes the pyruvyl group from chorismate, with concomitant aromatization of the ring, to provide 4-hydroxybenzoate (4HB) for the ubiquinone pathway. In Nitrosomonas europaea (strain ATCC 19718 / CIP 103999 / KCTC 2705 / NBRC 14298), this protein is Probable chorismate pyruvate-lyase.